A 471-amino-acid chain; its full sequence is Tryptophanase (471 aa).

N6-acetyllysine is present on residues lysine 5, lysine 115, and lysine 156. At lysine 270 the chain carries N6-(pyridoxal phosphate)lysine. Residue lysine 450 is modified to N6-acetyllysine.

This sequence belongs to the beta-eliminating lyase family. Homotetramer. Requires pyridoxal 5'-phosphate as cofactor.

It carries out the reaction L-tryptophan + H2O = indole + pyruvate + NH4(+). Its pathway is amino-acid degradation; L-tryptophan degradation via pyruvate pathway; indole and pyruvate from L-tryptophan: step 1/1. This Escherichia coli O9:H4 (strain HS) protein is Tryptophanase.